The chain runs to 66 residues: Large ribosomal subunit protein bL33 (66 aa).

It belongs to the bacterial ribosomal protein bL33 family.

The chain is Large ribosomal subunit protein bL33 from Synechococcus sp. (strain CC9311).